The following is a 774-amino-acid chain: Lon protease 2 (774 aa).

A Lon N-terminal domain is found at 5–198 (YPLMPLRDIV…LLLEILFREL (194 aa)). An ATP-binding site is contributed by 350-357 (GPPGVGKT). Positions 588–769 (RDEVGLATGL…DQVLEQALLS (182 aa)) constitute a Lon proteolytic domain. Residues S675 and K718 contribute to the active site.

It belongs to the peptidase S16 family. Homohexamer. Organized in a ring with a central cavity.

It localises to the cytoplasm. The enzyme catalyses Hydrolysis of proteins in presence of ATP.. Its function is as follows. ATP-dependent serine protease that mediates the selective degradation of mutant and abnormal proteins as well as certain short-lived regulatory proteins. Required for cellular homeostasis and for survival from DNA damage and developmental changes induced by stress. Degrades polypeptides processively to yield small peptide fragments that are 5 to 10 amino acids long. Binds to DNA in a double-stranded, site-specific manner. The polypeptide is Lon protease 2 (Desulfotalea psychrophila (strain LSv54 / DSM 12343)).